The sequence spans 123 residues: Small ribosomal subunit protein uS12cz/uS12cy (123 aa).

The protein belongs to the universal ribosomal protein uS12 family. As to quaternary structure, part of the 30S ribosomal subunit.

Its subcellular location is the plastid. It is found in the chloroplast. Its function is as follows. With S4 and S5 plays an important role in translational accuracy. Located at the interface of the 30S and 50S subunits. The sequence is that of Small ribosomal subunit protein uS12cz/uS12cy (rps12-A) from Angiopteris evecta (Mule's foot fern).